Reading from the N-terminus, the 394-residue chain is Elongation factor Tu 1 (394 aa).

The tr-type G domain occupies 10–204 (KPHVNVGTIG…ALDSYIPEPQ (195 aa)). Positions 19-26 (GHVDHGKT) are G1. Position 19-26 (19-26 (GHVDHGKT)) interacts with GTP. T26 is a binding site for Mg(2+). The G2 stretch occupies residues 60-64 (GITIS). Residues 81–84 (DCPG) are G3. GTP-binding positions include 81 to 85 (DCPGH) and 136 to 139 (NKCD). The tract at residues 136 to 139 (NKCD) is G4. The interval 174 to 176 (SAL) is G5.

This sequence belongs to the TRAFAC class translation factor GTPase superfamily. Classic translation factor GTPase family. EF-Tu/EF-1A subfamily. In terms of assembly, monomer.

Its subcellular location is the cytoplasm. It catalyses the reaction GTP + H2O = GDP + phosphate + H(+). Its function is as follows. GTP hydrolase that promotes the GTP-dependent binding of aminoacyl-tRNA to the A-site of ribosomes during protein biosynthesis. The protein is Elongation factor Tu 1 of Pseudoalteromonas translucida (strain TAC 125).